Here is a 180-residue protein sequence, read N- to C-terminus: Pro-glucagon (180 aa).

Positions 1 to 20 (MKSIYFVAGLFVMLVQGSWQ) are cleaved as a signal peptide. A disordered region spans residues 26-56 (TEEKSRSFSAPQTEPLNDLDQMNEDKRHSQG). A Phosphoserine modification is found at Ser-54. A propeptide spanning residues 84–89 (NKNNIA) is cleaved from the precursor. Phosphoserine occurs at positions 105 and 108. An Arginine amide modification is found at Arg-127. The propeptide occupies 131–145 (DFPEEVAIVEEFRRR). A phosphoserine mark is found at Ser-150 and Ser-152.

It belongs to the glucagon family. In terms of processing, proglucagon is post-translationally processed in a tissue-specific manner in pancreatic A cells and intestinal L cells. In pancreatic A cells, the major bioactive hormone is glucagon cleaved by PCSK2/PC2. In the intestinal L cells PCSK1/PC1 liberates GLP-1, GLP-2, glicentin and oxyntomodulin. GLP-1 is further N-terminally truncated by post-translational processing in the intestinal L cells resulting in GLP-1(7-37) GLP-1-(7-36)amide. The C-terminal amidation is neither important for the metabolism of GLP-1 nor for its effects on the endocrine pancreas. Glucagon is secreted in the A cells of the islets of Langerhans. GLP-1, GLP-2, oxyntomodulin and glicentin are secreted from enteroendocrine cells throughout the gastrointestinal tract. GLP-1 and GLP-2 are also secreted in selected neurons in the brain.

The protein resides in the secreted. In terms of biological role, plays a key role in glucose metabolism and homeostasis. Regulates blood glucose by increasing gluconeogenesis and decreasing glycolysis. A counterregulatory hormone of insulin, raises plasma glucose levels in response to insulin-induced hypoglycemia. Plays an important role in initiating and maintaining hyperglycemic conditions in diabetes. Its function is as follows. Potent stimulator of glucose-dependent insulin release. Also stimulates insulin release in response to IL6. Plays important roles on gastric motility and the suppression of plasma glucagon levels. May be involved in the suppression of satiety and stimulation of glucose disposal in peripheral tissues, independent of the actions of insulin. Has growth-promoting activities on intestinal epithelium. May also regulate the hypothalamic pituitary axis (HPA) via effects on LH, TSH, CRH, oxytocin, and vasopressin secretion. Increases islet mass through stimulation of islet neogenesis and pancreatic beta cell proliferation. Inhibits beta cell apoptosis. Stimulates intestinal growth and up-regulates villus height in the small intestine, concomitant with increased crypt cell proliferation and decreased enterocyte apoptosis. The gastrointestinal tract, from the stomach to the colon is the principal target for GLP-2 action. Plays a key role in nutrient homeostasis, enhancing nutrient assimilation through enhanced gastrointestinal function, as well as increasing nutrient disposal. Stimulates intestinal glucose transport and decreases mucosal permeability. Functionally, significantly reduces food intake. Inhibits gastric emptying in humans. Suppression of gastric emptying may lead to increased gastric distension, which may contribute to satiety by causing a sensation of fullness. In terms of biological role, may modulate gastric acid secretion and the gastro-pyloro-duodenal activity. May play an important role in intestinal mucosal growth in the early period of life. This is Pro-glucagon (GCG) from Canis lupus familiaris (Dog).